The sequence spans 431 residues: Enolase (431 aa).

Gln-168 lines the (2R)-2-phosphoglycerate pocket. The Proton donor role is filled by Glu-210. Residues Asp-247, Glu-291, and Asp-318 each contribute to the Mg(2+) site. (2R)-2-phosphoglycerate-binding residues include Lys-343, Arg-372, Ser-373, and Lys-394. The active-site Proton acceptor is the Lys-343.

This sequence belongs to the enolase family. In terms of assembly, component of the RNA degradosome, a multiprotein complex involved in RNA processing and mRNA degradation. Mg(2+) is required as a cofactor.

The protein resides in the cytoplasm. Its subcellular location is the secreted. It localises to the cell surface. The enzyme catalyses (2R)-2-phosphoglycerate = phosphoenolpyruvate + H2O. The protein operates within carbohydrate degradation; glycolysis; pyruvate from D-glyceraldehyde 3-phosphate: step 4/5. In terms of biological role, catalyzes the reversible conversion of 2-phosphoglycerate (2-PG) into phosphoenolpyruvate (PEP). It is essential for the degradation of carbohydrates via glycolysis. This chain is Enolase, found in Acinetobacter baumannii (strain AYE).